A 643-amino-acid polypeptide reads, in one-letter code: Protein cueball (643 aa).

Residues 1–21 form the signal peptide; it reads MMIWVPALIFLSACLLPRSNG. At 22–530 the chain is on the extracellular side; the sequence is TPLEWDFAVT…VCQTPFVWTS (509 aa). N-linked (GlcNAc...) asparagine glycans are attached at residues Asn77 and Asn103. LDL-receptor class B repeat units follow at residues 116–163, 164–208, and 209–254; these read RNLF…DICR, RKLY…DQLS, and DRLF…TNDA. N-linked (GlcNAc...) asparagine glycosylation is present at Asn172. Over residues 276–290 the composition is skewed to polar residues; that stretch reads ATTTVRPEVESSTDG. A disordered region spans residues 276–303; that stretch reads ATTTVRPEVESSTDGTESESKQESEPVE. An N-linked (GlcNAc...) asparagine glycan is attached at Asn312. EGF-like domains are found at residues 363–397, 398–429, and 432–470; these read RMDQ…SRCE, IREC…FTGE, and EVSN…ERCE. Cystine bridges form between Cys372/Cys385, Cys387/Cys396, Cys401/Cys410, Cys405/Cys420, Cys436/Cys446, Cys440/Cys458, and Cys460/Cys469. N-linked (GlcNAc...) asparagine glycans are attached at residues Asn472 and Asn507. Residues 531 to 551 form a helical membrane-spanning segment; the sequence is SVIIILVVGIVFSLLLITTII. The Cytoplasmic segment spans residues 552–643; sequence HGIRRLYKPK…LIHNMEDDLY (92 aa).

The protein belongs to the cueball family.

Its subcellular location is the cell membrane. Has a role in spermatogenesis and oogenesis. This Drosophila ananassae (Fruit fly) protein is Protein cueball.